The following is a 413-amino-acid chain: 1-acylglycerol-3-phosphate O-acyltransferase Pnpla3 (413 aa).

Topologically, residues 1–42 (MYDPERRWSLSFAGCGFLGFYHVGATLCLSERAPHLLRDART) are cytoplasmic. A PNPLA domain is found at 10–179 (LSFAGCGFLG…SDNVPVLDAK (170 aa)). A GXGXXG motif is present at residues 14–19 (GCGFLG). A helical; Signal-anchor for type II membrane protein membrane pass occupies residues 43–63 (FFGCSAGALHAVTFVCSLPLG). The short motif at 45 to 49 (GCSAG) is the GXSXG element. Ser47 functions as the Nucleophile in the catalytic mechanism. Residues 64-413 (RIMEILMDLV…HKPQGNSAGL (350 aa)) are Lumenal-facing. Asp166 (proton acceptor) is an active-site residue. The DGA/G motif lies at 166-168 (DGG). N-linked (GlcNAc...) asparagine glycans are attached at residues Asn206 and Asn209. Residues 389 to 413 (KDDHRMLKHGHHPSPHKPQGNSAGL) are disordered. The span at 394–403 (MLKHGHHPSP) shows a compositional bias: basic residues.

Restricted to adipose tissue. Expressed in inguinal and epididymal white adipose tissues and in interscapular brown adipose tissue. Also expressed in liver in response to high-sucrose diet.

It localises to the membrane. Its subcellular location is the lipid droplet. It carries out the reaction a 1-acyl-sn-glycero-3-phosphate + an acyl-CoA = a 1,2-diacyl-sn-glycero-3-phosphate + CoA. The enzyme catalyses a triacylglycerol + H2O = a diacylglycerol + a fatty acid + H(+). The catalysed reaction is a 1-acylglycerol + a 1,3-diacylglycerol = a triacylglycerol + glycerol. It catalyses the reaction a 1-acylglycerol + a 1,2-diacylglycerol = a triacylglycerol + glycerol. It carries out the reaction 2 a 1-acylglycerol = a 1,2-diacylglycerol + glycerol. The enzyme catalyses 1-(9Z-octadecenoyl)-sn-glycero-3-phosphate + (9Z)-octadecenoyl-CoA = 1,2-di-(9Z-octadecenoyl)-sn-glycero-3-phosphate + CoA. The catalysed reaction is 1-(9Z-octadecenoyl)-sn-glycero-3-phosphate + hexadecanoyl-CoA = 1-(9Z)-octadecenoyl-2-hexadecanoyl-sn-glycero-3-phosphate + CoA. It catalyses the reaction 1-(9Z-octadecenoyl)-sn-glycero-3-phosphate + (9Z,12Z)-octadecadienoyl-CoA = 1-(9Z)-octadecenoyl-2-(9Z,12Z)-octadecadienoyl-sn-glycero-3-phosphate + CoA. It carries out the reaction 1-(9Z-octadecenoyl)-sn-glycero-3-phosphate + (5Z,8Z,11Z,14Z)-eicosatetraenoyl-CoA = 1-(9Z)-octadecenoyl-2-(5Z,8Z,11Z,14Z)-eicosatetraenoyl-sn-glycero-3-phosphate + CoA. The enzyme catalyses 2 1-(9Z-octadecenoyl)-glycerol = 1,2-di-(9Z-octadecenoyl)-glycerol + glycerol. The catalysed reaction is 1-(9Z-octadecenoyl)-glycerol + 1,2-di-(9Z-octadecenoyl)-glycerol = 1,2,3-tri-(9Z-octadecenoyl)-glycerol + glycerol. It catalyses the reaction 1-(9Z-octadecenoyl)-glycerol + 1,3-di-(9Z-octadecenoyl)-glycerol = 1,2,3-tri-(9Z-octadecenoyl)-glycerol + glycerol. It carries out the reaction 1,2,3-tri-(9Z-octadecenoyl)-glycerol + H2O = 1,3-di-(9Z-octadecenoyl)-glycerol + (9Z)-octadecenoate + H(+). The enzyme catalyses a 1,2-diacyl-sn-glycero-3-phosphocholine + H2O = a 1-acyl-sn-glycero-3-phosphocholine + a fatty acid + H(+). It participates in phospholipid metabolism. It functions in the pathway glycerolipid metabolism. Specifically catalyzes coenzyme A (CoA)-dependent acylation of 1-acyl-sn-glycerol 3-phosphate (2-lysophosphatidic acid/LPA) to generate phosphatidic acid (PA), an important metabolic intermediate and precursor for both triglycerides and glycerophospholipids. Does not esterify other lysophospholipids. Acyl donors are long chain (at least C16) fatty acyl-CoAs: arachidonoyl-CoA, linoleoyl-CoA, oleoyl-CoA and at a lesser extent palmitoyl-CoA. Additionally possesses low triacylglycerol lipase and CoA-independent acylglycerol transacylase activities and thus may play a role in acyl-chain remodeling of triglycerides. In vitro may express hydrolytic activity against glycerolipids triacylglycerol, diacylglycerol and monoacylglycerol, with a strong preference for oleic acid as the acyl moiety. However, the triacylglycerol hydrolase activity is controversial and may be very low. Possesses phospholipase A2 activity. The sequence is that of 1-acylglycerol-3-phosphate O-acyltransferase Pnpla3 from Mus musculus (Mouse).